The following is an 82-amino-acid chain: Small ribosomal subunit protein bS16 (82 aa).

The protein belongs to the bacterial ribosomal protein bS16 family.

In Aeromonas salmonicida (strain A449), this protein is Small ribosomal subunit protein bS16.